The following is a 503-amino-acid chain: MNKDILLIVDSMSNERGVSKEVIFEAIEAALAAVTAKRYEEDDVKIRVAIDQKTGDYESFRCWTVVEDTNESLEFPNQEMTLKQAREIDSDLEVGDVIEEPVESVKFGRIAVQQAKQVIVQKVREAERAKIIRQYEKRVGELVIGVVKRVTRESIILDMGENAEALLLREEMIPREAFRINDRLRAYLYSVCQDKKRGPQLLVSRTRPEFLVELFKIEVPEIGEEVIEIKGAARDPGSRAKIAVKTNDGRIDPIGACVGMRGSRVQAVSNELGGERIDIVLWDDNPAQLVINAMAPAEVASIVVDEDSHTMDIAVNKDQLSQAIGRSGQNVRLASELTGWTLNVMSEAEMAQKHEKEAGKIKTAFMEKLDVDEEVADALVQAGFMNLEEVAYVPKEELQGVEGFDEDISAELQRRAGDVLLTQEIAKQELDEKKPAEDLLTLPGMTTELARQLVENEVLTRDDLAEKSVLDLKEIIEIDDEAAANLIMAARAHWFAEEESEKS.

The region spanning 140 to 206 (GELVIGVVKR…RGPQLLVSRT (67 aa)) is the S1 motif domain. One can recognise a KH domain in the interval 308–374 (SHTMDIAVNK…FMEKLDVDEE (67 aa)).

It belongs to the NusA family. As to quaternary structure, monomer. Binds directly to the core enzyme of the DNA-dependent RNA polymerase and to nascent RNA.

The protein localises to the cytoplasm. In terms of biological role, participates in both transcription termination and antitermination. This is Transcription termination/antitermination protein NusA from Coxiella burnetii (strain RSA 493 / Nine Mile phase I).